We begin with the raw amino-acid sequence, 98 residues long: YcgL domain-containing protein CJA_2437 (98 aa).

One can recognise a YcgL domain in the interval 3–87; the sequence is IIAEIYRSPK…RDLVDAEAKR (85 aa).

The protein is YcgL domain-containing protein CJA_2437 of Cellvibrio japonicus (strain Ueda107) (Pseudomonas fluorescens subsp. cellulosa).